The primary structure comprises 62 residues: Alpha-conotoxin ViIA (62 aa).

An N-terminal signal peptide occupies residues Met1–Ser18. A propeptide spanning residues Val19–Leu45 is cleaved from the precursor. 2 disulfides stabilise this stretch: Cys48–Cys54 and Cys49–Cys61.

This sequence belongs to the conotoxin A superfamily. In terms of processing, the toxin is inactive on the alpha-3-beta-2 nAChR when the disulfide bond connectivity is C1-C4 and C2-C3 (ViIA-I) (IC(50)&gt;10000 nM). In terms of tissue distribution, expressed by the venom duct.

It localises to the secreted. Its function is as follows. Alpha-conotoxins act on postsynaptic membranes, they bind to the nicotinic acetylcholine receptors (nAChR) and thus inhibit them. This toxin selectively inhibits nicotinic acetylcholine receptor (nAChR) alpha-3-beta-2 subtype (IC(50)=845.5 nM). The polypeptide is Alpha-conotoxin ViIA (Conus virgo (Virgin cone)).